Consider the following 157-residue polypeptide: Small ribosomal subunit protein uS7 (157 aa).

The protein belongs to the universal ribosomal protein uS7 family. Part of the 30S ribosomal subunit. Contacts proteins S9 and S11.

Its function is as follows. One of the primary rRNA binding proteins, it binds directly to 16S rRNA where it nucleates assembly of the head domain of the 30S subunit. Is located at the subunit interface close to the decoding center, probably blocks exit of the E-site tRNA. This chain is Small ribosomal subunit protein uS7, found in Desulfotalea psychrophila (strain LSv54 / DSM 12343).